The chain runs to 630 residues: Biosynthetic arginine decarboxylase (630 aa).

N6-(pyridoxal phosphate)lysine is present on Lys99. 281-291 provides a ligand contact to substrate; it reads VDIGGGLGVDY.

This sequence belongs to the Orn/Lys/Arg decarboxylase class-II family. SpeA subfamily. Mg(2+) is required as a cofactor. Requires pyridoxal 5'-phosphate as cofactor.

It catalyses the reaction L-arginine + H(+) = agmatine + CO2. Its pathway is amine and polyamine biosynthesis; agmatine biosynthesis; agmatine from L-arginine: step 1/1. Catalyzes the biosynthesis of agmatine from arginine. This chain is Biosynthetic arginine decarboxylase, found in Bacteroides fragilis (strain ATCC 25285 / DSM 2151 / CCUG 4856 / JCM 11019 / LMG 10263 / NCTC 9343 / Onslow / VPI 2553 / EN-2).